Reading from the N-terminus, the 470-residue chain is Zinc finger protein weckle (470 aa).

A required for homodimerization region spans residues 1 to 103; that stretch reads MGVPTSDWIY…DALRLEYGLP (103 aa). One can recognise a ZAD domain in the interval 10-82; sequence YWCRLCARDD…SKVQAIFELL (73 aa). Cys-12, Cys-15, Cys-55, and Cys-58 together coordinate Zn(2+). The segment at 156 to 265 is disordered; sequence NSDPKVLASP…LSMSPHGSQS (110 aa). A Phosphoserine modification is found at Ser-168. The span at 195-208 shows a compositional bias: acidic residues; the sequence is ESDDEEAILDEDEA. The segment covering 214–225 has biased composition (basic residues); it reads LKRKRGRPKGSG. Over residues 237-254 the composition is skewed to basic and acidic residues; the sequence is TSREPDDNAKSKQDDKTS. Over residues 255–265 the composition is skewed to polar residues; it reads ELSMSPHGSQS. C2H2-type zinc fingers lie at residues 271-294, 300-322, 328-350, 355-377, 383-405, and 411-434; these read YPCKICNETFMSFMALRRHKHDMH, YVCDHCGKGLKTFTSLVEHQLVH, CICPVCNAGFKNKARLRVHSQTH, FECNVCGKKLQTRAILNKHKYVH, FKCEVCGSGCKNSTALKIHLLGH, and YVCKYCGKAFASNTNCRSHKWKKH.

In terms of assembly, homodimer. Interacts with Myd88 and Toll.

The protein localises to the cell membrane. In terms of biological role, acts as an adapter to assemble/stabilize a Toll/wek/Myd88/tube complex; required for efficient recruitment of Myd88 to Toll. Dispensable for innate immune response; plays a minimal role, if any, in the immune defense against Gram-positive bacteria and fungi. Involved in dorsoventral axis determination. This is Zinc finger protein weckle from Drosophila melanogaster (Fruit fly).